A 387-amino-acid polypeptide reads, in one-letter code: 3-ketoacyl-CoA thiolase (387 aa).

The active-site Acyl-thioester intermediate is the Cys-91. Residues His-343 and Cys-373 each act as proton acceptor in the active site.

This sequence belongs to the thiolase-like superfamily. Thiolase family. Heterotetramer of two alpha chains (FadB) and two beta chains (FadA).

The protein resides in the cytoplasm. The enzyme catalyses an acyl-CoA + acetyl-CoA = a 3-oxoacyl-CoA + CoA. It functions in the pathway lipid metabolism; fatty acid beta-oxidation. Catalyzes the final step of fatty acid oxidation in which acetyl-CoA is released and the CoA ester of a fatty acid two carbons shorter is formed. The chain is 3-ketoacyl-CoA thiolase from Escherichia fergusonii (strain ATCC 35469 / DSM 13698 / CCUG 18766 / IAM 14443 / JCM 21226 / LMG 7866 / NBRC 102419 / NCTC 12128 / CDC 0568-73).